A 348-amino-acid polypeptide reads, in one-letter code: Dihydroorotase (348 aa).

2 residues coordinate Zn(2+): histidine 17 and histidine 19. Residues 19–21 and asparagine 45 contribute to the substrate site; that span reads HLR. Residues lysine 103, histidine 140, and histidine 178 each contribute to the Zn(2+) site. Lysine 103 bears the N6-carboxylysine mark. Histidine 140 provides a ligand contact to substrate. Residue leucine 223 coordinates substrate. Position 251 (aspartate 251) interacts with Zn(2+). Aspartate 251 is a catalytic residue. Residues histidine 255 and alanine 267 each coordinate substrate.

Belongs to the metallo-dependent hydrolases superfamily. DHOase family. Class II DHOase subfamily. In terms of assembly, homodimer. It depends on Zn(2+) as a cofactor.

The enzyme catalyses (S)-dihydroorotate + H2O = N-carbamoyl-L-aspartate + H(+). The protein operates within pyrimidine metabolism; UMP biosynthesis via de novo pathway; (S)-dihydroorotate from bicarbonate: step 3/3. In terms of biological role, catalyzes the reversible cyclization of carbamoyl aspartate to dihydroorotate. This chain is Dihydroorotase, found in Yersinia pestis.